The sequence spans 493 residues: Cytochrome P450 monooxygenase esdpG (493 aa).

A helical membrane pass occupies residues 10–30 (VLGVTWLSALFTLGSLSVFWL). Cys434 lines the heme pocket.

Belongs to the cytochrome P450 family. Heme is required as a cofactor.

It is found in the membrane. It functions in the pathway secondary metabolite biosynthesis; terpenoid biosynthesis. In terms of biological role, cytochrome P450 monooxygenasee; part of the cluster that mediates the biosynthesis of shearones, diterpenoid pyrones (DPs) which are structurally diverse meroterpenoids consisting of a diterpene linked by a pyrone, and which may exhibit a range of bioactivities. Whitin the pathway, esdpG takes part in the molecular scaffold modification via the hydroxylation at C-11 and C-12 and can transform shearone A into shearone C and shearone B into shearone D. The molecular scaffold is commonly biosynthesized by a series of enzymes including the non-reducing polyketide synthase (NR-PKS) esdpA that generates an alpha-pyrone; the prenyltransferase esdpC that attaches a geranylgeranyl pyrophosphate (GGPP) produced by the GGPP synthase (GGPPS) esdpD onto the pyrone unit; the FAD-dependent monooxygenase esdpE that converts an olefin on the diterpene unit into an epoxide; and the terpene cyclase esdpB that catalyzes the cyclization reactions to give the molecular backbone shearone A. In the modification steps, esdpF oxidizes the hydroxy group to a ketone at C-3 and esdpG then attaches hydroxy groups at both C-11 and C-12. After that, esdpI hydroxylates at C-20 and esdpH hydroxylates at C-6'. The ether bridge is generated by nucleophilic attack of the hydroxy group at C-20 to the carbonyl carbon at C-3. EsdpH can also functions prior to esdpI. The different combinations of these modification enzymes lead to the production of diverse shearone derivatives, shearone I being the end product of the pathway. The alpha-ketoglutarate-dependent dioxygenase esdpJ seems not to be involved in this pathway. The protein is Cytochrome P450 monooxygenase esdpG of Penicillium shearii (Eupenicillium shearii).